The following is a 187-amino-acid chain: MRLVLLGPPGSGKGTQATRLKEKLEIAHISTGDMLRAEIAAGTELGKQAKTVMDAGNLVSDDILLGMLESRLTQPDVAKGFILDGYPRNVAQANAMDGLLAKIGQPLDAVVQLDVATELLVERIAGRAKEQGRADDTPEAVRQRLQVYNDQTAPVVDFYAGRGTLARVDGVGELDEIEARILAAIKA.

10–15 (GSGKGT) provides a ligand contact to ATP. An NMP region spans residues 30-59 (STGDMLRAEIAAGTELGKQAKTVMDAGNLV). Residues T31, R36, 57 to 59 (NLV), 85 to 88 (GYPR), and Q92 each bind AMP. Positions 126-136 (GRAKEQGRADD) are LID. R127 contacts ATP. Positions 133 and 144 each coordinate AMP. Residue G172 coordinates ATP.

This sequence belongs to the adenylate kinase family. In terms of assembly, monomer.

It localises to the cytoplasm. It catalyses the reaction AMP + ATP = 2 ADP. It participates in purine metabolism; AMP biosynthesis via salvage pathway; AMP from ADP: step 1/1. Functionally, catalyzes the reversible transfer of the terminal phosphate group between ATP and AMP. Plays an important role in cellular energy homeostasis and in adenine nucleotide metabolism. The chain is Adenylate kinase from Stenotrophomonas maltophilia (strain K279a).